The chain runs to 330 residues: Beta-ketoacyl-[acyl-carrier-protein] synthase III (330 aa).

Residues cysteine 114 and histidine 255 contribute to the active site. The ACP-binding stretch occupies residues 256–260 (QANQR). Asparagine 285 is a catalytic residue.

Belongs to the thiolase-like superfamily. FabH family. As to quaternary structure, homodimer.

Its subcellular location is the cytoplasm. It carries out the reaction malonyl-[ACP] + acetyl-CoA + H(+) = 3-oxobutanoyl-[ACP] + CO2 + CoA. The protein operates within lipid metabolism; fatty acid biosynthesis. In terms of biological role, catalyzes the condensation reaction of fatty acid synthesis by the addition to an acyl acceptor of two carbons from malonyl-ACP. Catalyzes the first condensation reaction which initiates fatty acid synthesis and may therefore play a role in governing the total rate of fatty acid production. Possesses both acetoacetyl-ACP synthase and acetyl transacylase activities. Its substrate specificity determines the biosynthesis of branched-chain and/or straight-chain of fatty acids. The chain is Beta-ketoacyl-[acyl-carrier-protein] synthase III from Trichormus variabilis (strain ATCC 29413 / PCC 7937) (Anabaena variabilis).